A 612-amino-acid polypeptide reads, in one-letter code: Probable serine/threonine-protein kinase WNK4 (612 aa).

The Protein kinase domain occupies Ile-25–Leu-282. Residues Thr-105 to Phe-108 and Lys-155 contribute to the ATP site. Residue Asp-172 is the Proton acceptor of the active site.

This sequence belongs to the protein kinase superfamily. Ser/Thr protein kinase family. WNK subfamily.

The enzyme catalyses L-seryl-[protein] + ATP = O-phospho-L-seryl-[protein] + ADP + H(+). It carries out the reaction L-threonyl-[protein] + ATP = O-phospho-L-threonyl-[protein] + ADP + H(+). In Oryza sativa subsp. japonica (Rice), this protein is Probable serine/threonine-protein kinase WNK4 (WNK4).